The following is a 511-amino-acid chain: Bifunctional purine biosynthesis protein PurH (511 aa).

Residues 1-145 (MKKRALVSVS…KNHKFVSVIV (145 aa)) enclose the MGS-like domain.

The protein belongs to the PurH family.

It catalyses the reaction (6R)-10-formyltetrahydrofolate + 5-amino-1-(5-phospho-beta-D-ribosyl)imidazole-4-carboxamide = 5-formamido-1-(5-phospho-D-ribosyl)imidazole-4-carboxamide + (6S)-5,6,7,8-tetrahydrofolate. It carries out the reaction IMP + H2O = 5-formamido-1-(5-phospho-D-ribosyl)imidazole-4-carboxamide. The protein operates within purine metabolism; IMP biosynthesis via de novo pathway; 5-formamido-1-(5-phospho-D-ribosyl)imidazole-4-carboxamide from 5-amino-1-(5-phospho-D-ribosyl)imidazole-4-carboxamide (10-formyl THF route): step 1/1. It participates in purine metabolism; IMP biosynthesis via de novo pathway; IMP from 5-formamido-1-(5-phospho-D-ribosyl)imidazole-4-carboxamide: step 1/1. The polypeptide is Bifunctional purine biosynthesis protein PurH (Bacillus cereus (strain ATCC 14579 / DSM 31 / CCUG 7414 / JCM 2152 / NBRC 15305 / NCIMB 9373 / NCTC 2599 / NRRL B-3711)).